Here is a 425-residue protein sequence, read N- to C-terminus: Enolase (425 aa).

A (2R)-2-phosphoglycerate-binding site is contributed by Gln-162. Glu-204 acts as the Proton donor in catalysis. The Mg(2+) site is built by Asp-241, Glu-282, and Asp-309. The (2R)-2-phosphoglycerate site is built by Lys-334, Arg-363, Ser-364, and Lys-385. Lys-334 serves as the catalytic Proton acceptor.

Belongs to the enolase family. Requires Mg(2+) as cofactor.

Its subcellular location is the cytoplasm. The protein resides in the secreted. It localises to the cell surface. It catalyses the reaction (2R)-2-phosphoglycerate = phosphoenolpyruvate + H2O. It functions in the pathway carbohydrate degradation; glycolysis; pyruvate from D-glyceraldehyde 3-phosphate: step 4/5. Functionally, catalyzes the reversible conversion of 2-phosphoglycerate (2-PG) into phosphoenolpyruvate (PEP). It is essential for the degradation of carbohydrates via glycolysis. The polypeptide is Enolase (Corynebacterium urealyticum (strain ATCC 43042 / DSM 7109)).